A 425-amino-acid polypeptide reads, in one-letter code: Podosporapepsin (425 aa).

The first 28 residues, 1–28, serve as a signal peptide directing secretion; it reads MVSLTDLFLASLLVPTSPWLCLPPRIDT. Positions 29-91 are cleaved as a propeptide — activation peptide; sequence IDQRGGRVTL…QEEAFARIKR (63 aa). The Peptidase A1 domain maps to 108–419; it reads YVTPVTIGTP…GTNPPRIGFA (312 aa). Aspartate 126 is a catalytic residue. 2 N-linked (GlcNAc...) asparagine glycosylation sites follow: asparagine 184 and asparagine 273. The active site involves aspartate 310. An intrachain disulfide couples cysteine 346 to cysteine 381. N-linked (GlcNAc...) asparagine glycosylation is present at asparagine 370.

Belongs to the peptidase A1 family.

The chain is Podosporapepsin (PAPA) from Podospora anserina (Pleurage anserina).